Consider the following 65-residue polypeptide: 7 kDa A-type inclusion protein (65 aa).

Residues 1 to 20 (MSNQNIPQLSEYQTSVSQVA) show a composition bias toward polar residues. Residues 1–32 (MSNQNIPQLSEYQTSVSQVAVTPPPKPKTPQI) form a disordered region.

In Bos taurus (Bovine), this protein is 7 kDa A-type inclusion protein.